A 649-amino-acid polypeptide reads, in one-letter code: ABC transporter G family member 5 (649 aa).

Residues valine 42–leucine 284 enclose the ABC transporter domain. Glycine 80–serine 87 provides a ligand contact to ATP. The interval serine 308–glycine 336 is disordered. The region spanning glutamate 371–phenylalanine 581 is the ABC transmembrane type-2 domain. 6 helical membrane-spanning segments follow: residues leucine 390–histidine 410, leucine 425–leucine 445, leucine 474–leucine 494, leucine 506–valine 526, phenylalanine 529–tyrosine 549, and valine 617–cysteine 637.

Belongs to the ABC transporter superfamily. ABCG family. Eye pigment precursor importer (TC 3.A.1.204) subfamily.

It is found in the membrane. In Arabidopsis thaliana (Mouse-ear cress), this protein is ABC transporter G family member 5 (ABCG5).